We begin with the raw amino-acid sequence, 419 residues long: Serine hydroxymethyltransferase (419 aa).

(6S)-5,6,7,8-tetrahydrofolate is bound by residues Leu121 and 125–127 (GHL). An N6-(pyridoxal phosphate)lysine modification is found at Lys229. 354 to 356 (SPF) is a (6S)-5,6,7,8-tetrahydrofolate binding site.

The protein belongs to the SHMT family. In terms of assembly, homodimer. It depends on pyridoxal 5'-phosphate as a cofactor.

The protein resides in the cytoplasm. It carries out the reaction (6R)-5,10-methylene-5,6,7,8-tetrahydrofolate + glycine + H2O = (6S)-5,6,7,8-tetrahydrofolate + L-serine. Its pathway is one-carbon metabolism; tetrahydrofolate interconversion. It functions in the pathway amino-acid biosynthesis; glycine biosynthesis; glycine from L-serine: step 1/1. In terms of biological role, catalyzes the reversible interconversion of serine and glycine with tetrahydrofolate (THF) serving as the one-carbon carrier. This reaction serves as the major source of one-carbon groups required for the biosynthesis of purines, thymidylate, methionine, and other important biomolecules. Also exhibits THF-independent aldolase activity toward beta-hydroxyamino acids, producing glycine and aldehydes, via a retro-aldol mechanism. The polypeptide is Serine hydroxymethyltransferase (Coxiella burnetii (strain CbuG_Q212) (Coxiella burnetii (strain Q212))).